The chain runs to 356 residues: Phospho-N-acetylmuramoyl-pentapeptide-transferase (356 aa).

10 consecutive transmembrane segments (helical) span residues 4 to 24 (ILLA…WFIH), 53 to 73 (GGAV…LVTW), 76 to 96 (PSIS…IGFL), 116 to 136 (LLGQ…FPDV), 152 to 172 (ISWL…LIAG), 186 to 206 (LATG…IWQF), 228 to 248 (DIAV…WWNA), 253 to 273 (IFLG…MAVV), 278 to 298 (LLLV…MLQV), and 333 to 353 (FWII…AEWV).

The protein belongs to the glycosyltransferase 4 family. MraY subfamily. It depends on Mg(2+) as a cofactor.

It localises to the cell membrane. It carries out the reaction UDP-N-acetyl-alpha-D-muramoyl-L-alanyl-gamma-D-glutamyl-meso-2,6-diaminopimeloyl-D-alanyl-D-alanine + di-trans,octa-cis-undecaprenyl phosphate = di-trans,octa-cis-undecaprenyl diphospho-N-acetyl-alpha-D-muramoyl-L-alanyl-D-glutamyl-meso-2,6-diaminopimeloyl-D-alanyl-D-alanine + UMP. Its pathway is cell wall biogenesis; peptidoglycan biosynthesis. Catalyzes the initial step of the lipid cycle reactions in the biosynthesis of the cell wall peptidoglycan: transfers peptidoglycan precursor phospho-MurNAc-pentapeptide from UDP-MurNAc-pentapeptide onto the lipid carrier undecaprenyl phosphate, yielding undecaprenyl-pyrophosphoryl-MurNAc-pentapeptide, known as lipid I. The sequence is that of Phospho-N-acetylmuramoyl-pentapeptide-transferase from Cutibacterium acnes (strain DSM 16379 / KPA171202) (Propionibacterium acnes).